We begin with the raw amino-acid sequence, 449 residues long: Signal recognition particle protein (449 aa).

GTP is bound by residues 109-116 (GLQGSGKT), 191-195 (DTAGR), and 249-252 (SRID).

This sequence belongs to the GTP-binding SRP family. SRP54 subfamily. Part of the signal recognition particle protein translocation system, which is composed of SRP and FtsY. SRP is a ribonucleoprotein composed of Ffh and a 4.5S RNA molecule.

Its subcellular location is the cytoplasm. It catalyses the reaction GTP + H2O = GDP + phosphate + H(+). Involved in targeting and insertion of nascent membrane proteins into the cytoplasmic membrane. Binds to the hydrophobic signal sequence of the ribosome-nascent chain (RNC) as it emerges from the ribosomes. The SRP-RNC complex is then targeted to the cytoplasmic membrane where it interacts with the SRP receptor FtsY. Interaction with FtsY leads to the transfer of the RNC complex to the Sec translocase for insertion into the membrane, the hydrolysis of GTP by both Ffh and FtsY, and the dissociation of the SRP-FtsY complex into the individual components. This chain is Signal recognition particle protein, found in Rickettsia conorii (strain ATCC VR-613 / Malish 7).